Reading from the N-terminus, the 453-residue chain is ATP-dependent RNA helicase dbp8 (453 aa).

The Q motif motif lies at 7–35 (KSFSDLGISPWLIDTLKALAIYEPTDIQE). A Helicase ATP-binding domain is found at 38-214 (IAQILEGRNC…YQPQKNNKPP (177 aa)). 51–58 (AKTGSGKT) serves as a coordination point for ATP. The short motif at 160-163 (DEAD) is the DEAD box element. The 164-residue stretch at 230–393 (TLQQSYIFVS…YEHVSENKML (164 aa)) folds into the Helicase C-terminal domain. Positions 413–453 (RGFGERRQKRNEKRLMANGISNKLKNSGRKKKAKNTLSTEK) are disordered.

This sequence belongs to the DEAD box helicase family. DDX49/DBP8 subfamily.

The protein resides in the nucleus. Its subcellular location is the nucleolus. It catalyses the reaction ATP + H2O = ADP + phosphate + H(+). In terms of biological role, ATP-binding RNA helicase involved in 40S ribosomal subunit biogenesis and is required for the normal formation of 18S rRNAs through pre-rRNA processing at A0, A1 and A2 sites. Required for vegetative growth. The sequence is that of ATP-dependent RNA helicase dbp8 (dbp8) from Schizosaccharomyces pombe (strain 972 / ATCC 24843) (Fission yeast).